The sequence spans 94 residues: Probable Fe(2+)-trafficking protein (94 aa).

It belongs to the Fe(2+)-trafficking protein family.

Could be a mediator in iron transactions between iron acquisition and iron-requiring processes, such as synthesis and/or repair of Fe-S clusters in biosynthetic enzymes. The sequence is that of Probable Fe(2+)-trafficking protein from Alcanivorax borkumensis (strain ATCC 700651 / DSM 11573 / NCIMB 13689 / SK2).